The sequence spans 961 residues: Ras-interacting protein 1 (961 aa).

Residues 1 to 10 (MLSGERKEGG) show a composition bias toward basic and acidic residues. Disordered regions lie at residues 1–21 (MLSG…HLPV), 35–70 (LGRR…PHVE), and 96–116 (RGSG…QRWA). The span at 41 to 57 (SAASVKSSSSDTGSRSS) shows a compositional bias: low complexity. Residues 59 to 68 (PLPPPPPPPH) show a composition bias toward pro residues. Arginine 96 carries the post-translational modification Omega-N-methylarginine. Residues 98 to 110 (SGAGGAGGPGTPG) show a composition bias toward gly residues. The region spanning 141 to 253 (PPGVLKIFAS…RRFELRGREE (113 aa)) is the Ras-associating domain. The interval 261 to 352 (AFGAADADGT…MAPGAADAQM (92 aa)) is disordered. 2 positions are modified to phosphoserine: serine 274 and serine 286. The span at 284–295 (AASGGAALASPG) shows a compositional bias: low complexity. The segment covering 296-307 (PGSGSGTPTGSG) has biased composition (gly residues). The segment covering 314 to 327 (NLSLRRSVSELSLQ) has biased composition (low complexity). A phosphoserine mark is found at serine 320, serine 322, serine 325, and serine 413. Residues 594–895 (GRLARLIKEA…PPAERDAVDT (302 aa)) enclose the Dilute domain.

Interacts with Ras family members that have been activated by GTP binding. Interacts with HRAS, RAP1A, RAP2, RRAS, RAF1 and RRAS2. Interacts with MYH9 and ARHGAP29. In terms of tissue distribution, detected in kidney, heart, skeletal muscle, small intestine and lung.

It localises to the cytoplasm. The protein resides in the perinuclear region. The protein localises to the golgi apparatus. Its subcellular location is the golgi stack. Functionally, required for the proper formation of vascular structures that develop via both vasculogenesis and angiogenesis. Acts as a critical and vascular-specific regulator of GTPase signaling, cell architecture, and adhesion, which is essential for endothelial cell morphogenesis and blood vessel tubulogenesis. Regulates the activity of Rho GTPases in part by recruiting ARHGAP29 and suppressing RhoA signaling and dampening ROCK and MYH9 activities in endothelial cells. May act as effector for Golgi-bound HRAS and other Ras-like proteins. May promote HRAS-mediated transformation. Negative regulator of amino acid starvation-induced autophagy. The protein is Ras-interacting protein 1 (Rasip1) of Mus musculus (Mouse).